The primary structure comprises 297 residues: MFSNYRQYWDLTKPKVVALIVFTALVGMVLAIPGVPSWEQVRAGVLGFLGIWLAASAAAAINQLLDAHIDAQMARTSWRPLVVGKVKPWQVLVFASVLIVLSMVILVLWVNLITAVLTFASLIGYAVIYTVYLKRATSQNIVIGGLAGAMPPMLGWAAVTGMQGSSDWAYSSLLVLIIFIWTPPHFWALAIFRREDYAKAEIPMLPVTHGVVHTRKQIMVYSVVLALVCLLPYLVGMSGAFYLGGAIVLNAVFLWYAWRMLDPPDELFSMKMFYYSIVYLMALFAFLLVDHWILPWL.

9 consecutive transmembrane segments (helical) span residues 16 to 36, 45 to 65, 93 to 113, 114 to 134, 141 to 161, 172 to 192, 223 to 243, 244 to 264, and 277 to 297; these read VVAL…PGVP, VLGF…NQLL, VFAS…VNLI, TAVL…VYLK, IVIG…AVTG, SLLV…LAIF, VVLA…AFYL, GGAI…LDPP, and IVYL…LPWL.

Belongs to the UbiA prenyltransferase family. Protoheme IX farnesyltransferase subfamily.

The protein localises to the cell inner membrane. The enzyme catalyses heme b + (2E,6E)-farnesyl diphosphate + H2O = Fe(II)-heme o + diphosphate. The protein operates within porphyrin-containing compound metabolism; heme O biosynthesis; heme O from protoheme: step 1/1. Converts heme B (protoheme IX) to heme O by substitution of the vinyl group on carbon 2 of heme B porphyrin ring with a hydroxyethyl farnesyl side group. This is Protoheme IX farnesyltransferase from Stenotrophomonas maltophilia (strain R551-3).